Here is a 514-residue protein sequence, read N- to C-terminus: Maturase K (514 aa).

The protein belongs to the intron maturase 2 family. MatK subfamily.

It is found in the plastid. The protein resides in the chloroplast. In terms of biological role, usually encoded in the trnK tRNA gene intron. Probably assists in splicing its own and other chloroplast group II introns. This chain is Maturase K, found in Drosophyllum lusitanicum (Portuguese sundew).